A 497-amino-acid polypeptide reads, in one-letter code: Glycerol kinase (497 aa).

An ADP-binding site is contributed by Thr12. Residues Thr12, Thr13, and Ser14 each coordinate ATP. Residue Thr12 participates in sn-glycerol 3-phosphate binding. Residue Arg16 participates in ADP binding. Positions 82, 83, 134, and 243 each coordinate sn-glycerol 3-phosphate. Positions 82, 83, 134, 243, and 244 each coordinate glycerol. Positions 265 and 308 each coordinate ADP. Positions 265, 308, 312, and 409 each coordinate ATP. Gly409 and Asn413 together coordinate ADP.

The protein belongs to the FGGY kinase family. As to quaternary structure, homotetramer and homodimer (in equilibrium).

It catalyses the reaction glycerol + ATP = sn-glycerol 3-phosphate + ADP + H(+). It participates in polyol metabolism; glycerol degradation via glycerol kinase pathway; sn-glycerol 3-phosphate from glycerol: step 1/1. Activated by phosphorylation and inhibited by fructose 1,6-bisphosphate (FBP). Functionally, key enzyme in the regulation of glycerol uptake and metabolism. Catalyzes the phosphorylation of glycerol to yield sn-glycerol 3-phosphate. This Thermoanaerobacter pseudethanolicus (strain ATCC 33223 / 39E) (Clostridium thermohydrosulfuricum) protein is Glycerol kinase.